A 785-amino-acid polypeptide reads, in one-letter code: Tripartite terminase subunit 1 (785 aa).

The C3H1-type zinc-finger motif lies at 197–225 (CAVCFEELCVTANQGATIARRLADRICNH). A disordered region spans residues 433-489 (GGAADAPKGGAGPDDDGDRVAVEEGTRGLGAPGGGGEDEDRRRGPGGQGPETWGDIA). Residue 696–703 (FASVYRCG) coordinates ATP.

This sequence belongs to the herpesviridae TRM1 protein family. In terms of assembly, associates with TRM2 and TRM3 to form the tripartite terminase complex. Interacts with portal protein.

The protein resides in the host nucleus. Its function is as follows. Component of the molecular motor that translocates viral genomic DNA in empty capsid during DNA packaging. Forms a tripartite terminase complex together with TRM2 and TRM3 in the host cytoplasm. Once the complex reaches the host nucleus, it interacts with the capsid portal vertex. This portal forms a ring in which genomic DNA is translocated into the capsid. TRM1 carries an endonuclease activity that plays an important role for the cleavage of concatemeric viral DNA into unit length genomes. This is Tripartite terminase subunit 1 from Human herpesvirus 1 (strain Angelotti) (HHV-1).